The following is a 194-amino-acid chain: Orotate phosphoribosyltransferase (194 aa).

114-122 contacts 5-phospho-alpha-D-ribose 1-diphosphate; it reads EDVVTTGKS. Residues Thr118 and Arg146 each coordinate orotate.

Belongs to the purine/pyrimidine phosphoribosyltransferase family. PyrE subfamily. Homodimer. Mg(2+) serves as cofactor.

It catalyses the reaction orotidine 5'-phosphate + diphosphate = orotate + 5-phospho-alpha-D-ribose 1-diphosphate. The protein operates within pyrimidine metabolism; UMP biosynthesis via de novo pathway; UMP from orotate: step 1/2. Functionally, catalyzes the transfer of a ribosyl phosphate group from 5-phosphoribose 1-diphosphate to orotate, leading to the formation of orotidine monophosphate (OMP). The sequence is that of Orotate phosphoribosyltransferase from Clostridioides difficile (strain 630) (Peptoclostridium difficile).